Reading from the N-terminus, the 495-residue chain is Probable aminotransferase ACS12 (495 aa).

Lys-334 carries the N6-(pyridoxal phosphate)lysine modification.

Belongs to the class-I pyridoxal-phosphate-dependent aminotransferase family. In terms of assembly, homodimer. The cofactor is pyridoxal 5'-phosphate. Expressed in roots. Expressed at low level in leaves, stems, flowers and siliques.

In terms of biological role, probable aminotransferase. Does not have 1-aminocyclopropane-1-carboxylate synthase (ACS) activity, suggesting that it is not involved in ethylene biosynthesis. The polypeptide is Probable aminotransferase ACS12 (ACS12) (Arabidopsis thaliana (Mouse-ear cress)).